The primary structure comprises 586 residues: Malonate--CoA ligase ACSF3, mitochondrial (586 aa).

Residues 1 to 89 (MPLPYVGMAL…SREICQLRAC (89 aa)) constitute a mitochondrion transit peptide. Residues 203–211 (TSGTTGRPK), Asp457, Arg471, and Lys563 each bind ATP.

Belongs to the ATP-dependent AMP-binding enzyme family.

It is found in the mitochondrion. The catalysed reaction is tetracosanoate + ATP + CoA = tetracosanoyl-CoA + AMP + diphosphate. The enzyme catalyses malonate + ATP + CoA = malonyl-CoA + AMP + diphosphate. In terms of biological role, catalyzes the initial reaction in intramitochondrial fatty acid synthesis, by activating malonate and methylmalonate, but not acetate, into their respective CoA thioester. May have some preference toward very-long-chain substrates. The chain is Malonate--CoA ligase ACSF3, mitochondrial from Bos taurus (Bovine).